A 146-amino-acid chain; its full sequence is Large ribosomal subunit protein uL15 (146 aa).

The segment covering 1–10 has biased composition (basic and acidic residues); the sequence is MTLKLHDLRP. Residues 1–41 form a disordered region; the sequence is MTLKLHDLRPARGSKIARTRVGRGDGSKGKTAGRGTKGTRA.

Belongs to the universal ribosomal protein uL15 family. As to quaternary structure, part of the 50S ribosomal subunit.

Binds to the 23S rRNA. The chain is Large ribosomal subunit protein uL15 from Mycobacterium tuberculosis (strain ATCC 25177 / H37Ra).